Reading from the N-terminus, the 690-residue chain is Glycine--tRNA ligase beta subunit (690 aa).

It belongs to the class-II aminoacyl-tRNA synthetase family. In terms of assembly, tetramer of two alpha and two beta subunits.

The protein resides in the cytoplasm. The catalysed reaction is tRNA(Gly) + glycine + ATP = glycyl-tRNA(Gly) + AMP + diphosphate. The sequence is that of Glycine--tRNA ligase beta subunit from Desulfitobacterium hafniense (strain DSM 10664 / DCB-2).